Here is a 240-residue protein sequence, read N- to C-terminus: Ribosomal RNA large subunit methyltransferase E (240 aa).

A compositionally biased stretch (gly residues) spans 1–20 (MSKAGGNKGGSRTGGRGGAG). Residues 1–33 (MSKAGGNKGGSRTGGRGGAGSSNLHVRVKKKAG) form a disordered region. S-adenosyl-L-methionine contacts are provided by glycine 92, tryptophan 94, aspartate 115, aspartate 131, and aspartate 155. Residue lysine 195 is the Proton acceptor of the active site.

It belongs to the class I-like SAM-binding methyltransferase superfamily. RNA methyltransferase RlmE family.

The protein localises to the cytoplasm. It catalyses the reaction uridine(2552) in 23S rRNA + S-adenosyl-L-methionine = 2'-O-methyluridine(2552) in 23S rRNA + S-adenosyl-L-homocysteine + H(+). In terms of biological role, specifically methylates the uridine in position 2552 of 23S rRNA at the 2'-O position of the ribose in the fully assembled 50S ribosomal subunit. This chain is Ribosomal RNA large subunit methyltransferase E, found in Brucella abortus (strain S19).